The following is a 61-amino-acid chain: Probable tautomerase SAV1363 (61 aa).

Catalysis depends on proline 2, which acts as the Proton acceptor; via imino nitrogen.

The protein belongs to the 4-oxalocrotonate tautomerase family.

In Staphylococcus aureus (strain Mu50 / ATCC 700699), this protein is Probable tautomerase SAV1363.